A 170-amino-acid chain; its full sequence is Thialysine N-epsilon-acetyltransferase (170 aa).

Residues 4–166 (TRIREARESD…FRFEGEAMRE (163 aa)) enclose the N-acetyltransferase domain. 27–28 (FE) serves as a coordination point for substrate. Lys29 is subject to N6-acetyllysine. Substrate is bound at residue Glu92. Acetyl-CoA contacts are provided by residues 94–96 (IYV), 102–107 (GQGIGT), 133–135 (NKK), and Tyr140. The active-site Proton donor is Tyr140. Glu152 contacts substrate.

The protein belongs to the acetyltransferase family. Homodimer.

It is found in the cytoplasm. The enzyme catalyses S-(2-aminoethyl)-L-cysteine + acetyl-CoA = S-(2-acetamidoethyl)-L-cysteine + CoA + H(+). It carries out the reaction an alkane-alpha,omega-diamine + acetyl-CoA = an N-acetylalkane-alpha,omega-diamine + CoA + H(+). In terms of biological role, catalyzes the N-acetylation of the amino acid thialysine (S-(2-aminoethyl)-L-cysteine), a L-lysine analog with the 4-methylene group substituted with a sulfur. May also catalyze acetylation of polyamines, such as norspermidine, spermidine or spermine. However, ability to acetylate polyamines is weak, suggesting that it does not act as a diamine acetyltransferase in vivo. In Mus musculus (Mouse), this protein is Thialysine N-epsilon-acetyltransferase.